Here is a 694-residue protein sequence, read N- to C-terminus: Acetolactate synthase catalytic subunit, mitochondrial (694 aa).

A mitochondrion-targeting transit peptide spans 1–42; it reads MLRSRQATNALRAVGQTRPLRSQTAVAFTQSLNKVPSNRRSE. Residues 45–58 show a composition bias toward low complexity; the sequence is VATASSTASGAFNS. Positions 45–69 are disordered; the sequence is VATASSTASGAFNSQVRPTPSPTFN. Residues 59–69 are compositionally biased toward polar residues; sequence QVRPTPSPTFN. A thiamine diphosphate-binding site is contributed by Glu140. Residues Arg242, 358–379, and 410–429 each bind FAD; these read HGSA…LGGR and EIMP…IVGD. A thiamine pyrophosphate binding region spans residues 505–585; that stretch reads QHQMWTAQHF…VKVIVLNNEE (81 aa). Mg(2+) contacts are provided by Asp556, Asn583, and Glu585.

The protein belongs to the TPP enzyme family. As to quaternary structure, homodimer. The cofactor is Mg(2+). Thiamine diphosphate is required as a cofactor.

The protein localises to the mitochondrion. It carries out the reaction 2 pyruvate + H(+) = (2S)-2-acetolactate + CO2. The catalysed reaction is 2-oxobutanoate + pyruvate + H(+) = (S)-2-ethyl-2-hydroxy-3-oxobutanoate + CO2. The protein operates within amino-acid biosynthesis; L-isoleucine biosynthesis; L-isoleucine from 2-oxobutanoate: step 1/4. It participates in amino-acid biosynthesis; L-valine biosynthesis; L-valine from pyruvate: step 1/4. Its function is as follows. Acetolactate synthase catalytic subunit, mitochondrial; part of the gene cluster that mediates the biosynthesis of chlorflavonin, a fungal flavonoid with acetolactate synthase inhibitory activity. Is not direcly involved in chlorflavonin biosynthesis but acts as a self-resistant protein that effectively confers chlorflavonin resistance to the native host. As a catalytic subunit of mitochondrial acetolactate synthase, catalyzes the first of a series of common steps in the biosynthesis of the branched-chain amino acids. Catalyzes the irreversible decarboxylation of pyruvate to a bound hydroxyethyl group that then condenses with either a second pyruvate molecule to form 2-acetolactate (AL) or with 2-ketobutyrate to form 2-aceto-2-hydroxybutyrate (AHB). The first product is the precursor for valine and leucine biosynthesis, while the second leads to isoleucine. This Aspergillus candidus protein is Acetolactate synthase catalytic subunit, mitochondrial.